Here is a 394-residue protein sequence, read N- to C-terminus: Phosphorylated adapter RNA export protein (394 aa).

2 stretches are compositionally biased toward acidic residues: residues 1-18 and 65-77; these read MAQEAGDMDDGQVSDSDS and SSEESFSDSDDDS. Residues 1–109 form a disordered region; sequence MAQEAGDMDD…DQSSQKPPIA (109 aa). The residue at position 2 (alanine 2) is an N-acetylalanine. The interval 2 to 329 is necessary for interaction with CBP80; the sequence is AQEAGDMDDG…KAARKRRIQV (328 aa). Phosphoserine is present on residues serine 14, serine 16, serine 65, serine 66, serine 69, and serine 73. The Nuclear localization signal signature appears at 81–84; sequence KRKR. The Nuclear export signal signature appears at 130–139; sequence VATELGILGM. Positions 178-193 are enriched in basic and acidic residues; that stretch reads YMHGGKKTGPKEEENG. The tract at residues 178-208 is disordered; that stretch reads YMHGGKKTGPKEEENGQGHPKRKRPVKDRVG. Positions 198 to 201 match the Nuclear localization signal motif; the sequence is KRKR. The residue at position 226 (serine 226) is a Phosphoserine. A sufficient for poly U RNA-binding region spans residues 228 to 328; it reads ERVADEISFR…KKAARKRRIQ (101 aa). The segment at 279-287 is necessary for poly U RNA-binding and snRNA export; it reads GSRRRTPGG. Threonine 296 is subject to Phosphothreonine. Phosphoserine is present on residues serine 356 and serine 368. The segment at 365 to 394 is disordered; that stretch reads LDESQEGHGETKLDAEEAIEVDHSHDLDMF. Over residues 369 to 394 the composition is skewed to basic and acidic residues; it reads QEGHGETKLDAEEAIEVDHSHDLDMF.

Belongs to the PHAX family. Found in a U snRNA export complex with PHAX/RNUXA, NCBP1/CBP80, NCBP2/CBP20, RAN, XPO1 and m7G-capped RNA. Part of a precomplex with PHAX/RNUXA, NCBP1/CBP80, NCBP2/CBP20 and m7G-capped RNA. Interacts with NCBP1/CBP80. Found in a complex with snoRNA, Interacts with NCBP2/CBP20. Interacts with DDX39A; this interaction stimulates PHAX RNA binding activity. In terms of processing, phosphorylated in the nucleus. Dephosphorylated in the cytoplasm.

It is found in the nucleus. The protein localises to the nucleoplasm. It localises to the cajal body. Its subcellular location is the cytoplasm. Functionally, a phosphoprotein adapter involved in the XPO1-mediated U snRNA export from the nucleus. Bridge components required for U snRNA export, the cap binding complex (CBC)-bound snRNA on the one hand and the GTPase Ran in its active GTP-bound form together with the export receptor XPO1 on the other. Its phosphorylation in the nucleus is required for U snRNA export complex assembly and export, while its dephosphorylation in the cytoplasm causes export complex disassembly. It is recycled back to the nucleus via the importin alpha/beta heterodimeric import receptor. The directionality of nuclear export is thought to be conferred by an asymmetric distribution of the GTP- and GDP-bound forms of Ran between the cytoplasm and nucleus. Its compartmentalized phosphorylation cycle may also contribute to the directionality of export. Binds strongly to m7G-capped U1 and U5 small nuclear RNAs (snRNAs) in a sequence-unspecific manner and phosphorylation-independent manner. Also plays a role in the biogenesis of U3 small nucleolar RNA (snoRNA). Involved in the U3 snoRNA transport from nucleoplasm to Cajal bodies. Binds strongly to m7G-capped U3, U8 and U13 precursor snoRNAs and weakly to trimethylated (TMG)-capped U3, U8 and U13 snoRNAs. Also binds to telomerase RNA. This Bos taurus (Bovine) protein is Phosphorylated adapter RNA export protein (PHAX).